The chain runs to 310 residues: MAKIVVALGGNALGKSPQEQLELVKNTAKSLVGLITKGHEIVISHGNGPQVGSINLGLNYAAEHDQGPAFPFAECGAMSQAYIGYQLQESLQNELHSMGIDKQVVTLVTQVEVDEGDPAFNSPSKPIGLFYTKEEANRIQQEKGYQFVEDAGRGYRRVVPSPQPISIIELESIKTLVENDTLVIAAGGGGIPVIREQHDSFKGIDAVIDKDKTSALLGADIHCDQLIILTAIDYVYINYHTDQQQALKTTNIDTLKTYIEEKQFAKGSMLPKIESAISFIENNPNGSVLITSLNQLDAALEGKIGTLITK.

The protein belongs to the carbamate kinase family.

The protein localises to the cytoplasm. The catalysed reaction is hydrogencarbonate + NH4(+) + ATP = carbamoyl phosphate + ADP + H2O + H(+). It participates in metabolic intermediate metabolism; carbamoyl phosphate degradation; CO(2) and NH(3) from carbamoyl phosphate: step 1/1. This chain is Carbamate kinase 1 (arcC1), found in Staphylococcus epidermidis (strain ATCC 12228 / FDA PCI 1200).